Here is a 100-residue protein sequence, read N- to C-terminus: MNQSKQSLSNWLLIGGVIALAVLPLIFVRDAEFTGADSQAEKAISEVKPGYEPWFKPLFEPPSGEVESLLFSSQAALGAGIIGYAVGLYKGRSQQQRHKE.

Transmembrane regions (helical) follow at residues 8–28 (LSNWLLIGGVIALAVLPLIFV) and 69–89 (LLFSSQAALGAGIIGYAVGLY).

The protein belongs to the CbiN family. As to quaternary structure, forms an energy-coupling factor (ECF) transporter complex composed of an ATP-binding protein (A component, CbiO), a transmembrane protein (T component, CbiQ) and 2 possible substrate-capture proteins (S components, CbiM and CbiN) of unknown stoichimetry.

It localises to the cell inner membrane. The protein operates within cofactor biosynthesis; adenosylcobalamin biosynthesis. Its function is as follows. Part of the energy-coupling factor (ECF) transporter complex CbiMNOQ involved in cobalt import. This chain is Cobalt transport protein CbiN, found in Nostoc sp. (strain PCC 7120 / SAG 25.82 / UTEX 2576).